A 75-amino-acid polypeptide reads, in one-letter code: MNKKILLVIFIVTMLIVDEVNSFEFGSFIKRMWRSKLAKKLRAKGKELLRDYANRVLSPEEEAAAPAPVPAKRRR.

Residues 1 to 22 (MNKKILLVIFIVTMLIVDEVNS) form the signal peptide.

It belongs to the non-disulfide-bridged peptide (NDBP) superfamily. Long chain multifunctional peptide (group 2) family. In terms of tissue distribution, expressed by the venom gland.

It localises to the secreted. Its function is as follows. Antimicrobial peptide. This Mesobuthus eupeus (Lesser Asian scorpion) protein is Antimicrobial peptide Meucin-49-1.